Consider the following 560-residue polypeptide: Nucleoprotein (560 aa).

Positions 54 to 236 are binding site for the cap structure m7GTP; that stretch reads LRKAKRSDAD…ITRDESAVNI (183 aa). Positions 323–332 are enriched in polar residues; that stretch reads GRSWDNTSVD. The segment at 323-349 is disordered; it reads GRSWDNTSVDLNPKPDPGPRAPEKNGQ. Residues D380 and E382 each contribute to the Mn(2+) site. Zn(2+)-binding residues include E390, C497, H500, and C521. D525 provides a ligand contact to Mn(2+).

It belongs to the arenaviridae nucleocapsid protein family. Homomultimerizes to form the nucleocapsid. Binds to viral genomic RNA. Interacts with glycoprotein G2. Interacts with protein Z; this interaction probably directs the encapsidated genome to budding sites. Interacts with protein L; this interaction does not interfere with Z-L interaction. Interacts with host IKBKE (via Protein kinase domain); the interaction inhibits IKBKE kinase activity.

It is found in the virion. The protein resides in the host cytoplasm. Encapsidates the genome, protecting it from nucleases. The encapsidated genomic RNA is termed the nucleocapsid (NC). Serves as template for viral transcription and replication. The increased presence of protein N in host cell does not seem to trigger the switch from transcription to replication as observed in other negative strain RNA viruses. Through the interaction with host IKBKE, strongly inhibits the phosphorylation and nuclear translocation of host IRF3, a protein involved in interferon activation pathway, leading to the inhibition of interferon-beta and IRF3-dependent promoters activation. Also encodes a functional 3'-5' exoribonuclease that degrades preferentially dsRNA substrates and thereby participates in the suppression of interferon induction. This Cupixi mammarenavirus (isolate Rat/Brasil/BeAn 119303/1970) (CPXV) protein is Nucleoprotein.